Here is a 444-residue protein sequence, read N- to C-terminus: Tubulin beta-6 chain (444 aa).

Residues Gln11, Glu69, Ser138, Gly142, Thr143, Gly144, Asn204, and Asn226 each contribute to the GTP site. A Mg(2+)-binding site is contributed by Glu69.

Belongs to the tubulin family. In terms of assembly, dimer of alpha and beta chains. A typical microtubule is a hollow water-filled tube with an outer diameter of 25 nm and an inner diameter of 15 nM. Alpha-beta heterodimers associate head-to-tail to form protofilaments running lengthwise along the microtubule wall with the beta-tubulin subunit facing the microtubule plus end conferring a structural polarity. Microtubules usually have 13 protofilaments but different protofilament numbers can be found in some organisms and specialized cells. Mg(2+) serves as cofactor. Expressed in roots, leaf sheaths, anthers, and suspension cultured cells.

It is found in the cytoplasm. The protein localises to the cytoskeleton. Tubulin is the major constituent of microtubules, a cylinder consisting of laterally associated linear protofilaments composed of alpha- and beta-tubulin heterodimers. Microtubules grow by the addition of GTP-tubulin dimers to the microtubule end, where a stabilizing cap forms. Below the cap, tubulin dimers are in GDP-bound state, owing to GTPase activity of alpha-tubulin. In Oryza sativa subsp. japonica (Rice), this protein is Tubulin beta-6 chain (TUBB6).